The sequence spans 103 residues: Small ribosomal subunit protein uS10 (103 aa).

The protein belongs to the universal ribosomal protein uS10 family. In terms of assembly, part of the 30S ribosomal subunit.

In terms of biological role, involved in the binding of tRNA to the ribosomes. This is Small ribosomal subunit protein uS10 from Novosphingobium aromaticivorans (strain ATCC 700278 / DSM 12444 / CCUG 56034 / CIP 105152 / NBRC 16084 / F199).